A 382-amino-acid polypeptide reads, in one-letter code: Protein phosphatase 1A (382 aa).

Residue Gly2 is the site of N-myristoyl glycine attachment. In terms of domain architecture, PPM-type phosphatase spans 23–291 (RYGLSSMQGW…DNMSVILICF (269 aa)). Residues Asp60, Gly61, Asp239, and Asp282 each coordinate Mn(2+). A phosphoserine mark is found at Ser375 and Ser377.

This sequence belongs to the PP2C family. In terms of assembly, monomer. Interacts with SMAD2; the interaction dephosphorylates SMAD2 in its C-terminal SXS motif resulting in disruption of the SMAD2/SMAD4 complex, SMAD2 nuclear export and termination of the TGF-beta-mediated signaling. Interacts with SMAD2; the interaction dephosphorylates SMAD2 in its C-terminal SXS motif resulting in disruption of the SMAD2/SMAD4 complex, SMAD2 nuclear export and termination of the TGF-beta-mediated signaling. Interacts with the phosphorylated form of IKBKB/IKKB. It depends on Mg(2+) as a cofactor. Requires Mn(2+) as cofactor. N-myristoylation is essential for the recognition of its substrates for dephosphorylation.

Its subcellular location is the nucleus. It localises to the cytoplasm. The protein resides in the cytosol. It is found in the membrane. It carries out the reaction O-phospho-L-seryl-[protein] + H2O = L-seryl-[protein] + phosphate. The enzyme catalyses O-phospho-L-threonyl-[protein] + H2O = L-threonyl-[protein] + phosphate. Its function is as follows. Enzyme with a broad specificity. Negatively regulates TGF-beta signaling through dephosphorylating SMAD2 and SMAD3, resulting in their dissociation from SMAD4, nuclear export of the SMADs and termination of the TGF-beta-mediated signaling. Dephosphorylates PRKAA1 and PRKAA2. Plays an important role in the termination of TNF-alpha-mediated NF-kappa-B activation through dephosphorylating and inactivating IKBKB/IKKB. The chain is Protein phosphatase 1A (PPM1A) from Bos taurus (Bovine).